The following is a 139-amino-acid chain: Large ribosomal subunit protein uL22 (139 aa).

The interval 1–22 (MVSENEKTRRPKRSIQHRQNKD) is disordered. A compositionally biased stretch (basic residues) spans 9–18 (RRPKRSIQHR).

The protein belongs to the universal ribosomal protein uL22 family. Part of the 50S ribosomal subunit.

In terms of biological role, this protein binds specifically to 23S rRNA; its binding is stimulated by other ribosomal proteins, e.g. L4, L17, and L20. It is important during the early stages of 50S assembly. It makes multiple contacts with different domains of the 23S rRNA in the assembled 50S subunit and ribosome. Functionally, the globular domain of the protein is located near the polypeptide exit tunnel on the outside of the subunit, while an extended beta-hairpin is found that lines the wall of the exit tunnel in the center of the 70S ribosome. The chain is Large ribosomal subunit protein uL22 from Pseudothermotoga lettingae (strain ATCC BAA-301 / DSM 14385 / NBRC 107922 / TMO) (Thermotoga lettingae).